A 247-amino-acid polypeptide reads, in one-letter code: Geranylgeranylglyceryl phosphate synthase (247 aa).

Mg(2+)-binding residues include D23 and S52. Sn-glycerol 1-phosphate contacts are provided by residues 171-177, 203-204, and 225-226; these read YLEAGSG, GG, and GT.

The protein belongs to the GGGP/HepGP synthase family. Group II subfamily. Requires Mg(2+) as cofactor.

The protein resides in the cytoplasm. The catalysed reaction is sn-glycerol 1-phosphate + (2E,6E,10E)-geranylgeranyl diphosphate = sn-3-O-(geranylgeranyl)glycerol 1-phosphate + diphosphate. The protein operates within membrane lipid metabolism; glycerophospholipid metabolism. Functionally, prenyltransferase that catalyzes the transfer of the geranylgeranyl moiety of geranylgeranyl diphosphate (GGPP) to the C3 hydroxyl of sn-glycerol-1-phosphate (G1P). This reaction is the first ether-bond-formation step in the biosynthesis of archaeal membrane lipids. The polypeptide is Geranylgeranylglyceryl phosphate synthase (Methanosarcina acetivorans (strain ATCC 35395 / DSM 2834 / JCM 12185 / C2A)).